Here is a 124-residue protein sequence, read N- to C-terminus: MSYTPGQPVTAVVQRVEIHKLRQGENLILGFSIGGGIDQDPSQNPFSEDKTDKGIYVTRVSEGGPAEIAGLQIGDKIMQVNGWDMTMVTHDQARKRLTKRSEEVVRLLVTRQSLQKAVQQSMLS.

N-acetylserine is present on Ser-2. One can recognise a PDZ domain in the interval 15–112 (RVEIHKLRQG…EVVRLLVTRQ (98 aa)). Ser-61 carries the phosphoserine modification.

In terms of assembly, interacts (via its PDZ domain) with GLS2. Interacts (via its PDZ domain) with RTKN (via the C-terminal region); this interaction facilitates Rho-mediated activation of the FOS serum response element (SRE). Interacts (via PDZ domain) with ARHGEF16. Interacts (via PDZ domain) with KCNJ4 (via C-terminus). Competes with LIN7A for KCNJ4 binding. Interacts (via its PDZ domain) with CTNNB1; this interaction inhibits the transcriptional activity of CTNNB1. Interacts with ADGRB2.

It localises to the cytoplasm. Its subcellular location is the nucleus. The protein resides in the cell membrane. Functionally, may regulate a number of protein-protein interactions by competing for PDZ domain binding sites. Binds CTNNB1 and may thereby act as an inhibitor of the Wnt signaling pathway. Competes with LIN7A for KCNJ4 binding, and thereby promotes KCNJ4 internalization. May play a role in the Rho signaling pathway. This is Tax1-binding protein 3 from Mus musculus (Mouse).